Consider the following 770-residue polypeptide: Endothelin-converting enzyme 1 (770 aa).

Over Met1–Arg68 the chain is Cytoplasmic. At Thr25 the chain carries Phosphothreonine. Residues Leu69–Ile89 traverse the membrane as a helical; Signal-anchor for type II membrane protein segment. The Extracellular portion of the chain corresponds to Gln90–Trp770. The 673-residue stretch at Val98–Trp770 folds into the Peptidase M13 domain. Cystine bridges form between Cys99–Cys104, Cys122–Cys755, Cys130–Cys715, Cys185–Cys435, and Cys644–Cys767. N-linked (GlcNAc...) asparagine glycosylation is found at Asn166, Asn187, Asn210, Asn270, Asn316, Asn362, Asn383, and Asn539. Zn(2+) is bound at residue His607. The active site involves Glu608. His611 is a binding site for Zn(2+). N-linked (GlcNAc...) asparagine glycosylation is found at Asn632 and Asn651. Glu667 lines the Zn(2+) pocket. The active-site Proton donor is the Asp671.

The protein belongs to the peptidase M13 family. In terms of assembly, homodimer; disulfide-linked. Interacts with PPP1R16B. Interacts with TSPAN8; this interaction recruits the endothelin converting enzyme ECE1 to tetraspanin-enriched microdomains and positively modulates its enzymatic activity. Zn(2+) serves as cofactor. In terms of tissue distribution, all isoforms are expressed in umbilical vein endothelial cells, polynuclear neutrophils, fibroblasts, atrium cardiomyocytes and ventricles. Isoforms A, B and C are also expressed in placenta, lung, heart, adrenal gland and phaeochromocytoma; isoforms A and C in liver, testis and small intestine; isoform B, C and D in endothelial cells and umbilical vein smooth muscle cells; isoforms C and D in saphenous vein cells, and isoform C in kidney.

It is found in the cell membrane. It catalyses the reaction Hydrolysis of the 21-Trp-|-Val-22 bond in big endothelin to form endothelin 1.. With respect to regulation, inhibited by phosphoramidon. Activated by K49-P1-20, a twenty-residue synthetic peptide shortened from the snake B.asper myotoxin II. Functionally, converts big endothelin-1 to endothelin-1. The chain is Endothelin-converting enzyme 1 (ECE1) from Homo sapiens (Human).